Here is a 511-residue protein sequence, read N- to C-terminus: uncharacterized protein (511 aa).

A CoA carboxyltransferase N-terminal domain is found at 2–254; the sequence is LMDYEKERTE…NFQEKAPIHE (253 aa). The tract at residues 2–506 is carboxyltransferase; sequence LMDYEKERTE…KEMTFTNRKH (505 aa). In terms of domain architecture, CoA carboxyltransferase C-terminal spans 260 to 506; that stretch reads HFETPLADVI…KEMTFTNRKH (247 aa).

Belongs to the AccD/PCCB family.

This is an uncharacterized protein from Bacillus subtilis (strain 168).